Here is a 698-residue protein sequence, read N- to C-terminus: Macrophomene synthase (698 aa).

A terpene cyclase region spans residues 21–340 (MEYMYSVPLD…SCDRYSSYRR (320 aa)). Asp-113 contributes to the Mg(2+) binding site. A DDXXD 1 motif is present at residues 113-117 (DNIAE). The NSE/DTE signature appears at 242–250 (NDFFSFNYE). Residues 341-696 (EKHQMELPIR…IQLALERLRI (356 aa)) form a prenyltransferase region. A disordered region spans residues 368–387 (LPNGKQLDAPTESSGKDLSD). Lys-417, Arg-420, and His-449 together coordinate isopentenyl diphosphate. Asp-456 and Asp-460 together coordinate Mg(2+). Positions 456 to 460 (DDIED) match the DDXXD 2 motif. Arg-465 provides a ligand contact to dimethylallyl diphosphate. Arg-466 contacts isopentenyl diphosphate. Dimethylallyl diphosphate contacts are provided by Lys-543, Thr-544, Gln-579, Asn-586, Lys-596, and Lys-606.

In the N-terminal section; belongs to the terpene synthase family. It in the C-terminal section; belongs to the FPP/GGPP synthase family. As to quaternary structure, hexamer. It depends on Mg(2+) as a cofactor.

It carries out the reaction 5 isopentenyl diphosphate + dimethylallyl diphosphate = all-trans-hexaprenyl diphosphate + 5 diphosphate. It catalyses the reaction all-trans-hexaprenyl diphosphate = macrophomene + diphosphate. Functionally, bifunctional terpene synthase that converts dimethylallyl diphosphate (DMAPP) and isopentenyl diphosphate (IPP) into macrophomene as a single product. The C-terminal prenyltransferase (PT) domain of MpMS catalyzes formation of hexaprenyl diphosphate (HexPP), whereas the N-terminal terpene cyclase (TC) domain catalyzes the cyclization of HexPP to macrophomene. In Macrophomina phaseolina (strain MS6) (Charcoal rot fungus), this protein is Macrophomene synthase.